The primary structure comprises 211 residues: MPLPGFTKSDFETFLIDGLEERMAAIRSNIQPKFQVIGAELRDELSTLLGNEMFLHIAQHARRTTNPPNDTWLAVAGNKRGYKKHPHFQVGLFDDHLFIWLAFIYELPEKGNIAKTFLENKPLIEEVVPSDYVVSIDHTKKEANPLSELDLTQSLERFRDVKKAEWLVGRHFAKGSETVENGEQLMEAIRQTVKTLLPLYQLSLTAGAPTR.

This sequence belongs to the UPF0637 family.

The protein is UPF0637 protein ABC2405 of Shouchella clausii (strain KSM-K16) (Alkalihalobacillus clausii).